Here is a 186-residue protein sequence, read N- to C-terminus: Large ribosomal subunit protein bL9 (186 aa).

Residues 153 to 186 form a disordered region; sequence ELRQVKSQSQKSQQQEAKQNEVGEATDSDKADQK. The span at 157–169 shows a compositional bias: low complexity; sequence VKSQSQKSQQQEA.

Belongs to the bacterial ribosomal protein bL9 family.

Its function is as follows. Binds to the 23S rRNA. The sequence is that of Large ribosomal subunit protein bL9 from Wolbachia sp. subsp. Brugia malayi (strain TRS).